Consider the following 516-residue polypeptide: Leucine-rich repeat transmembrane neuronal protein 2 (516 aa).

The signal sequence occupies residues 1 to 33 (MGLHFKWPLGAPMLAAIYAMSMVLKMLPALGMA). The 28-residue stretch at 34–61 (CPPKCRCEKLLFYCDSQGFHSVPNATDK) folds into the LRRNT domain. The Extracellular segment spans residues 34 to 422 (CPPKCRCEKL…EPDNAIFTQR (389 aa)). Asparagine 57 carries N-linked (GlcNAc...) asparagine glycosylation. LRR repeat units lie at residues 63–83 (SLGLSLRHNHITELERDQFAS), 86–107 (QLTWLHLDHNQISTVKEDAFQG), 110–131 (KLKELILSSNKIFYLPNTTFTQ), 134–155 (NLQNLDLSFNQLSSLHPELFYG), 158–179 (KLQTLHLRSNSLRTIPVRLFWD), 182–203 (SLEFLDLSTNRLRSLARNGFAG), 206–227 (KLRELHLEHNQLTKINFAHFLR), 230–251 (SLHTLFLQWNKISNLTCGMEWT), 254–275 (TLEKLDLTGNEIKAIDLTVFET), and 278–299 (NLKILLMDNNKLNSLDSKILNS). An N-linked (GlcNAc...) asparagine glycan is attached at asparagine 126. N-linked (GlcNAc...) asparagine glycosylation occurs at asparagine 243. The LRRCT domain maps to 311–362 (NLWECSARICALASWLGSFQGRWEHSILCHSPDHTQGEDILDAVHGFQLCWN). N-linked (GlcNAc...) asparagine glycosylation occurs at asparagine 362. The helical transmembrane segment at 423–443 (VITGTMALLFSFFFIIFIVFI) threads the bilayer. Residues 444 to 516 (SRKCCPPTLR…QQLPYKECEV (73 aa)) lie on the Cytoplasmic side of the membrane. Residues 513 to 516 (ECEV) carry the Involved in DLG4-binding motif.

This sequence belongs to the LRRTM family. As to quaternary structure, interacts with DLG4. Interacts with neurexin NRXN1; interaction is mediated by heparan sulfate glycan modification on neurexin. In terms of tissue distribution, expressed in neuronal tissues.

It localises to the cell membrane. Its subcellular location is the postsynaptic cell membrane. Its function is as follows. Involved in the development and maintenance of excitatory synapses in the vertebrate nervous system. Regulates surface expression of AMPA receptors and instructs the development of functional glutamate release sites. Acts as a ligand for the presynaptic receptors NRXN1-A and NRXN1-B. This Homo sapiens (Human) protein is Leucine-rich repeat transmembrane neuronal protein 2 (LRRTM2).